Here is a 447-residue protein sequence, read N- to C-terminus: Cellulosome-anchoring protein (447 aa).

The N-terminal stretch at 1–29 (MKRIKRILAVLTIFALLATINAFTFVSLA) is a signal peptide. The 151-residue stretch at 30–180 (QTNTIEIIIG…EIIEASAPEA (151 aa)) folds into the Cohesin domain. A receptor binding site for duplicated segment of CipA region spans residues 30-180 (QTNTIEIIIG…EIIEASAPEA (151 aa)). The segment at 177 to 247 (APEATPTPGS…EHAPFLKGYP (71 aa)) is disordered. The span at 188-200 (AGSGAGGGTGSSG) shows a compositional bias: gly residues. The span at 201-223 (SGQPSATPTPTATEKPSTTPKTT) shows a compositional bias: low complexity. 3 consecutive SLH domains span residues 216–280 (PSTT…AGKN), 281–344 (SSIT…EQGT), and 345–408 (DVKT…GAVL). Positions 409–429 (EFTDVPVNYWAYKDIAEGVIY) constitute an SLH 4; truncated domain.

The protein localises to the secreted. It is found in the cell wall. Its subcellular location is the S-layer. Its function is as follows. Anchors the cellulosome to the cell surface by binding the duplicated segment that is present at the C-terminal end of CipA. In Acetivibrio thermocellus (strain ATCC 27405 / DSM 1237 / JCM 9322 / NBRC 103400 / NCIMB 10682 / NRRL B-4536 / VPI 7372) (Clostridium thermocellum), this protein is Cellulosome-anchoring protein (ancA).